The following is a 517-amino-acid chain: Pentatricopeptide repeat-containing protein At5g42450, mitochondrial (517 aa).

The N-terminal 23 residues, 1–23, are a transit peptide targeting the mitochondrion; it reads MLHMILSQRVILLRKYHSSANAL. 9 PPR repeats span residues 57–91, 92–126, 127–157, 158–188, 189–223, 225–259, 261–291, 294–329, and 368–398; these read DVIS…GIRP, NEFT…GLAS, NVFV…TRDP, NVVS…MPER, SVVT…GVVI, NEST…LGKR, NVFV…LEEE, NIVS…NLRP, and ELEH…MPLD. The segment at 403–478 is type E motif; sequence FWKALLGGCQ…FTGCSWIEVR (76 aa). The interval 479-509 is type E(+) motif; it reads DQIRVFVNADKNNELKDEVYRMLALVSQHLE.

The protein belongs to the PPR family. PCMP-E subfamily.

It is found in the mitochondrion. This Arabidopsis thaliana (Mouse-ear cress) protein is Pentatricopeptide repeat-containing protein At5g42450, mitochondrial (PCMP-E102).